The sequence spans 478 residues: Histidine--tRNA ligase (478 aa).

This sequence belongs to the class-II aminoacyl-tRNA synthetase family. In terms of assembly, homodimer.

It localises to the cytoplasm. The catalysed reaction is tRNA(His) + L-histidine + ATP = L-histidyl-tRNA(His) + AMP + diphosphate + H(+). This Xanthomonas axonopodis pv. citri (strain 306) protein is Histidine--tRNA ligase (hisS).